A 130-amino-acid chain; its full sequence is Anti-adapter protein IraD (130 aa).

This sequence belongs to the GpW/Gp25 family. IraD subfamily. Interacts with RssB.

It is found in the cytoplasm. Inhibits RpoS proteolysis by regulating RssB activity, thereby increasing the stability of the sigma stress factor RpoS during oxidative stress. Its effect on RpoS stability is due to its interaction with RssB, which probably blocks the interaction of RssB with RpoS, and the consequent delivery of the RssB-RpoS complex to the ClpXP protein degradation pathway. The sequence is that of Anti-adapter protein IraD from Escherichia coli O157:H7.